The chain runs to 288 residues: Small ribosomal subunit protein uS2 (288 aa).

Residues 267 to 288 are disordered; sequence EEVEEVEEEFIPSEIEDEDEKF.

Belongs to the universal ribosomal protein uS2 family.

The protein is Small ribosomal subunit protein uS2 of Petrotoga mobilis (strain DSM 10674 / SJ95).